Reading from the N-terminus, the 252-residue chain is Aquaporin TIP4-4 (252 aa).

2 consecutive transmembrane segments (helical) span residues 20–40 and 53–73; these read AVLA…GSAM and VVGL…MVSA. The NPA 1 motif lies at 83-85; it reads NPA. Transmembrane regions (helical) follow at residues 105–125, 143–163, and 168–188; these read VAAQ…LAVA, GVLM…ATVV, and AVGG…VLAG. Positions 197 to 199 match the NPA 2 motif; it reads NPA. A helical membrane pass occupies residues 216–236; it reads VYWVGPLIGGPLAGLVYDGLF.

The protein belongs to the MIP/aquaporin (TC 1.A.8) family. TIP (TC 1.A.8.10) subfamily.

The protein resides in the vacuole membrane. Aquaporins facilitate the transport of water and small neutral solutes across cell membranes. This chain is Aquaporin TIP4-4 (TIP4-4), found in Zea mays (Maize).